The primary structure comprises 91 residues: Teretoxin Tan6.2 (91 aa).

The signal sequence occupies residues Met-1–Leu-21. Positions Gly-22–Lys-50 are excised as a propeptide.

The protein belongs to the teretoxin M (TM) superfamily. In terms of processing, contains 3 disulfide bonds. As to expression, expressed by the venom duct.

The protein localises to the secreted. This Terebra anilis (Auger snail) protein is Teretoxin Tan6.2.